The following is a 267-amino-acid chain: Kallikrein-14 (267 aa).

The N-terminal stretch at 1–34 (MSLRVLGSGTWPSAPKMFLLLTALQVLAIAMTQS) is a signal peptide. The propeptide at 35–40 (QEDENK) is activation peptide. In terms of domain architecture, Peptidase S1 spans 41 to 265 (IIGGHTCTRS…YRSWIEETMR (225 aa)). Intrachain disulfides connect Cys47–Cys180, Cys68–Cys84, Cys159–Cys226, Cys191–Cys205, and Cys216–Cys241. Catalysis depends on charge relay system residues His83 and Asp127. Residue Ser220 is the Charge relay system of the active site.

The protein belongs to the peptidase S1 family. Kallikrein subfamily. Post-translationally, proteolytic cleavage of the activation peptide produces the active enzyme. As to expression, highly expressed in CNS, bone marrow and fetal liver. Also expressed in breast, thyroid, kidney, colon, pancreas, spleen, prostate, uterus, small intestine, placenta and skeletal muscle. Among 40 tissues tested, the highest expression is detected in skin followed by breast and prostate (at protein level). Expressed in stratum corneum by sweat ducts and sweat glands and detected in sweat (at protein level).

It localises to the secreted. The protein resides in the extracellular space. Its activity is regulated as follows. Inhibited by SERPINA1, SERPINC1, SERPINE1, SERPINF2, aprotinin, soybean, trypsin inhibitor and leupeptin. Inhibited by serine protease inhibitor SPINK5. Has an autoproteolytic activity which may have a regulatory effect. Activated by citrate and inhibited by zinc and to a lower extent by manganese. Serine-type endopeptidase with a dual trypsin-like and chymotrypsin-like substrate specificity. May activate/inactivate the proteinase-activated receptors F2R, F2RL1 and F2RL3 and other kallikreins including KLK1, KLK3, KLK5 and KLK11. May function in seminal clot liquefaction through direct cleavage of the semenogelin SEMG1 and SEMG2 and activation of KLK3. May function through desmoglein DSG1 cleavage in epidermal desquamation a process by which the most superficial corneocytes are shed from the skin surface. May be involved in several aspects of tumor progression including growth, invasion and angiogenesis. The protein is Kallikrein-14 (KLK14) of Homo sapiens (Human).